The chain runs to 84 residues: RNA-binding protein Hfq (84 aa).

A Sm domain is found at 9 to 69 (DRFLNILRTN…VSTIMPESFV (61 aa)).

This sequence belongs to the Hfq family. As to quaternary structure, homohexamer.

Its function is as follows. RNA chaperone that binds small regulatory RNA (sRNAs) and mRNAs to facilitate mRNA translational regulation in response to envelope stress, environmental stress and changes in metabolite concentrations. Also binds with high specificity to tRNAs. The chain is RNA-binding protein Hfq from Thermosipho africanus (strain TCF52B).